A 254-amino-acid polypeptide reads, in one-letter code: Alcohol dehydrogenase 1 (254 aa).

10-33 (FVAGLGGIGFDTSREIVKSGPKNL) provides a ligand contact to NAD(+). Position 138 (Ser-138) interacts with substrate. Tyr-151 serves as the catalytic Proton acceptor.

It belongs to the short-chain dehydrogenases/reductases (SDR) family. In terms of assembly, homodimer.

The catalysed reaction is a primary alcohol + NAD(+) = an aldehyde + NADH + H(+). It catalyses the reaction a secondary alcohol + NAD(+) = a ketone + NADH + H(+). This is Alcohol dehydrogenase 1 (Adh1) from Drosophila navojoa (Fruit fly).